The chain runs to 396 residues: Tryptophan synthase beta chain (396 aa).

Lys-90 carries the N6-(pyridoxal phosphate)lysine modification.

It belongs to the TrpB family. As to quaternary structure, tetramer of two alpha and two beta chains. It depends on pyridoxal 5'-phosphate as a cofactor.

It carries out the reaction (1S,2R)-1-C-(indol-3-yl)glycerol 3-phosphate + L-serine = D-glyceraldehyde 3-phosphate + L-tryptophan + H2O. The protein operates within amino-acid biosynthesis; L-tryptophan biosynthesis; L-tryptophan from chorismate: step 5/5. Functionally, the beta subunit is responsible for the synthesis of L-tryptophan from indole and L-serine. The sequence is that of Tryptophan synthase beta chain from Clostridium kluyveri (strain NBRC 12016).